The following is a 72-amino-acid chain: Translation initiation factor IF-1 (72 aa).

The S1-like domain occupies 1 to 72; the sequence is MSKEDMIEFS…SKGRITFRFK (72 aa).

The protein belongs to the IF-1 family. As to quaternary structure, component of the 30S ribosomal translation pre-initiation complex which assembles on the 30S ribosome in the order IF-2 and IF-3, IF-1 and N-formylmethionyl-tRNA(fMet); mRNA recruitment can occur at any time during PIC assembly.

It localises to the cytoplasm. Its function is as follows. One of the essential components for the initiation of protein synthesis. Stabilizes the binding of IF-2 and IF-3 on the 30S subunit to which N-formylmethionyl-tRNA(fMet) subsequently binds. Helps modulate mRNA selection, yielding the 30S pre-initiation complex (PIC). Upon addition of the 50S ribosomal subunit IF-1, IF-2 and IF-3 are released leaving the mature 70S translation initiation complex. This chain is Translation initiation factor IF-1, found in Gluconacetobacter diazotrophicus (strain ATCC 49037 / DSM 5601 / CCUG 37298 / CIP 103539 / LMG 7603 / PAl5).